Reading from the N-terminus, the 80-residue chain is MTTPAAPRRPFFRRRKTCPFSGPNAPKIDYKDTRLLSRYISERGKIVPSRITAVSAKKQRELAQAIKRARFLGLLPYVIR.

This sequence belongs to the bacterial ribosomal protein bS18 family. As to quaternary structure, part of the 30S ribosomal subunit. Forms a tight heterodimer with protein bS6.

Binds as a heterodimer with protein bS6 to the central domain of the 16S rRNA, where it helps stabilize the platform of the 30S subunit. In Beijerinckia indica subsp. indica (strain ATCC 9039 / DSM 1715 / NCIMB 8712), this protein is Small ribosomal subunit protein bS18.